Reading from the N-terminus, the 478-residue chain is MPAGSRAGSRLRSGSLPRPSRLTLKALRPAYAPRTPDSNGDLDTGSELGPGSPAPTAEEVEKEMAGPSQLCIRRWTTKHVAVWLKDEGFFEYVDILCNKHRLDGITLLTLTEYDLRSPPLEIKVLGDIKRLMLSVRKLQKIHTDVLEEMGYNSDSPMSPMTPFLSALQSADWLCNGEPTHSCDGPIPDLSSDQYQYMNGKNKHSARRLDPEYWKTILSCVYVFIVFGFTSFIMVIVHERVPDMQTYPPLPDIFLDSVPRIPWAFSMTEVCGVILCYIWILVLLLHKHRSILLRRLCSLMGTVFLLRCFTMFVTSLSVPGQHLQCTGKIYGSVWEKLRRAFAIWSGFGMTLTGVHTCGDYMFSGHTVVLTMLNFFVTEYTPRSWNFLHTLSWVLNLFGIFFILAAHEHYSIDVFIAFYITTRLFLYYHTLANTRAYHQSRRARIWFPMFSFFECNVNGTVPNEYCWPFSKPAIMKRLIG.

Low complexity predominate over residues 1–22 (MPAGSRAGSRLRSGSLPRPSRL). The disordered stretch occupies residues 1 to 65 (MPAGSRAGSR…TAEEVEKEMA (65 aa)). The SAM domain maps to 75–141 (WTTKHVAVWL…MLSVRKLQKI (67 aa)). Helical transmembrane passes span 216-236 (ILSC…MVIV), 264-284 (FSMT…VLLL), 295-315 (LCSL…VTSL), 341-361 (AIWS…DYMF), 385-405 (FLHT…LAAH), and 410-430 (IDVF…HTLA). The Cytoplasmic portion of the chain corresponds to 431-478 (NTRAYHQSRRARIWFPMFSFFECNVNGTVPNEYCWPFSKPAIMKRLIG).

This sequence belongs to the sphingomyelin synthase family. As to expression, expressed ubiquitously with highest levels in macrophages and testis.

Its subcellular location is the endoplasmic reticulum membrane. The enzyme catalyses an N-acylsphing-4-enine + a 1,2-diacyl-sn-glycero-3-phosphoethanolamine = an N-acylsphing-4-enine 1-phosphoethanolamine + a 1,2-diacyl-sn-glycerol. The catalysed reaction is an N-acylsphinganine + a 1,2-diacyl-sn-glycero-3-phosphoethanolamine = an N-acylsphinganine-1-phosphoethanolamine + a 1,2-diacyl-sn-glycerol. It carries out the reaction an N-acyl-(4R)-4-hydroxysphinganine + a 1,2-diacyl-sn-glycero-3-phosphoethanolamine = an N-acyl-(4R)-4-hydroxysphinganine-1-phosphoethanolamine + a 1,2-diacyl-sn-glycerol. It catalyses the reaction N-hexadecanoylsphinganine + a 1,2-diacyl-sn-glycero-3-phosphoethanolamine = N-hexadecanoyl-sphinganine-1-phosphoethanolamine + a 1,2-diacyl-sn-glycerol. The enzyme catalyses N-hexadecanoyl-(4R)-hydroxysphinganine + a 1,2-diacyl-sn-glycero-3-phosphoethanolamine = N-hexadecanoyl-(4R)-hydroxysphinganine-1-phosphoethanolamine + a 1,2-diacyl-sn-glycerol. The protein operates within sphingolipid metabolism. In terms of biological role, synthesizes sphingolipids through transfer of a phosphatidyl head group from a glycerophospholipid on to the primary hydroxyl of a ceramide in the lumen of the endoplasmic reticulum. Catalyzes the synthesis of ceramide phosphoethanolamines (CPEs) (such as N-acylsphing-4-enine 1-phosphoethanolamine) by transferring phosphoethanolamine head group, which is smaller and more hydrophilic than the phosphocholine (PC) headgroup transferred in the canonical sphingomyelin synthesis (SMS) reaction by SMS1 or SMS2, from a phosphatidylethanolamine (1,2-diacyl-sn-glycero-3-phosphoethanolamine, PE) to a ceramide (such as N-acylsphing-4-enine). The larger PC prevents an efficient fit in the enzyme's catalytic pocket, leading to little or no SMS activity. In vitro, in the absence of ceramide, it has PLC activity with preference for phosphatidylinositol and phosphatidic acid, but also hydrolyzes phosphatidylethanolamine. The sequence is that of Sphingomyelin synthase-related protein 1 from Mus musculus (Mouse).